Here is a 589-residue protein sequence, read N- to C-terminus: uncharacterized protein (589 aa).

The next 5 helical transmembrane spans lie at 11–31, 57–77, 97–117, 190–210, and 213–233; these read LNWI…TMLA, LILM…FSVL, FWFF…HAIA, IEFT…GFNI, and GVVF…VWIG. An ABC transmembrane type-1 domain is found at 57–357; sequence LILMLLVLFI…FRLFYEQFTL (301 aa). An ABC transporter domain is found at 390-587; sequence VALKNFGIKD…QLKLDVCLLC (198 aa). Residue 423–430 participates in ATP binding; that stretch reads GASGTGKT.

This sequence belongs to the ABC transporter superfamily.

It is found in the cell inner membrane. This is an uncharacterized protein from Haemophilus influenzae (strain ATCC 51907 / DSM 11121 / KW20 / Rd).